The chain runs to 266 residues: MLHSTKLVFRATPQALCFPVRSYSRYVRTVPKTASAKTTSKLAPSITTEDEVAEQDPSLQEPQSATSTASFAFHDAPPETRSVLNSSTNNNIDWSDSYHGLGSQPFSREIADILLAPIKDQDIEIKPDGLLYLPEIKYRRILNKAFGPGGWGLVPRTESLITKSQISREYGLICHGRLISIARGEQDYFGGEEKVTTALEGCKSNALMRCCKDLGIASELWDPGFIRKWKAKYCEEVFVEHVVNKKKKKLWKLKSNKKIEYPYKQL.

A mitochondrion-targeting transit peptide spans 1 to 23; sequence MLHSTKLVFRATPQALCFPVRSY. Polar residues-rich tracts occupy residues 37–47 and 57–68; these read KTTSKLAPSIT and PSLQEPQSATST. A disordered region spans residues 37–68; the sequence is KTTSKLAPSITTEDEVAEQDPSLQEPQSATST.

Belongs to the MGM101 family. In terms of assembly, forms homooligomers in vitro.

Its subcellular location is the mitochondrion matrix. The protein localises to the mitochondrion nucleoid. Plays a role in the replication of the mitochondrial genome and the maintenance of its telomeres. Able to catalyze strand annealing and D-loop formation. Binds a wide variety of DNA substrates. Exhibited the highest affinity for DNA molecules carrying 3' ssDNA overhangs (Y-form, 3' FLAP, 3' overhang) and for substrates with complex structures (X-O and Fork). Forms homogeneous ring-shaped structures at the ssDNA native telomeres ends. Oligomers seem to bind to the ssDNA as a filament until they reach the double-stranded region and induce the formation of bends and loops within the double-stranded part of the molecules. This is Mitochondrial genome maintenance protein MGM101 from Candida parapsilosis (strain CDC 317 / ATCC MYA-4646) (Yeast).